We begin with the raw amino-acid sequence, 213 residues long: Glutathione S-transferase (213 aa).

One can recognise a GST N-terminal domain in the interval 4 to 81; sequence AKPILYGAWI…YLEDKYPQHP (78 aa). In terms of domain architecture, GST C-terminal spans 86 to 211; it reads DIKTKGLDLQ…LPQNQPDAPS (126 aa).

Belongs to the GST superfamily. Zeta family.

Its subcellular location is the cytoplasm. The catalysed reaction is RX + glutathione = an S-substituted glutathione + a halide anion + H(+). Has a glutathione transferase activity with ethacrynic acid and nitrophenyl acetate. Has low glutathione peroxidase activity with cumene hydroperoxide. In Triticum aestivum (Wheat), this protein is Glutathione S-transferase (GSTZ1).